A 369-amino-acid chain; its full sequence is Aminomethyltransferase (369 aa).

The protein belongs to the GcvT family. In terms of assembly, the glycine cleavage system is composed of four proteins: P, T, L and H.

The catalysed reaction is N(6)-[(R)-S(8)-aminomethyldihydrolipoyl]-L-lysyl-[protein] + (6S)-5,6,7,8-tetrahydrofolate = N(6)-[(R)-dihydrolipoyl]-L-lysyl-[protein] + (6R)-5,10-methylene-5,6,7,8-tetrahydrofolate + NH4(+). Functionally, the glycine cleavage system catalyzes the degradation of glycine. The chain is Aminomethyltransferase from Xanthomonas oryzae pv. oryzae (strain MAFF 311018).